The sequence spans 178 residues: uncharacterized protein (178 aa).

2 consecutive transmembrane segments (helical) span residues 6-26 and 154-174; these read AIFG…VSGL and KELV…AMLI.

It is found in the cell membrane. This is an uncharacterized protein from Methanocaldococcus jannaschii (strain ATCC 43067 / DSM 2661 / JAL-1 / JCM 10045 / NBRC 100440) (Methanococcus jannaschii).